Reading from the N-terminus, the 636-residue chain is Biosynthetic arginine decarboxylase (636 aa).

N6-(pyridoxal phosphate)lysine is present on Lys-110. A substrate-binding site is contributed by 290-300 (IDVGGGLGVDY).

This sequence belongs to the Orn/Lys/Arg decarboxylase class-II family. SpeA subfamily. Requires Mg(2+) as cofactor. Pyridoxal 5'-phosphate serves as cofactor.

It carries out the reaction L-arginine + H(+) = agmatine + CO2. Its function is as follows. Catalyzes the biosynthesis of agmatine from arginine. In Pseudomonas aeruginosa (strain ATCC 15692 / DSM 22644 / CIP 104116 / JCM 14847 / LMG 12228 / 1C / PRS 101 / PAO1), this protein is Biosynthetic arginine decarboxylase.